Consider the following 141-residue polypeptide: Putative pre-16S rRNA nuclease (141 aa).

The protein belongs to the YqgF nuclease family.

It localises to the cytoplasm. Its function is as follows. Could be a nuclease involved in processing of the 5'-end of pre-16S rRNA. This chain is Putative pre-16S rRNA nuclease, found in Cupriavidus necator (strain ATCC 17699 / DSM 428 / KCTC 22496 / NCIMB 10442 / H16 / Stanier 337) (Ralstonia eutropha).